Here is a 271-residue protein sequence, read N- to C-terminus: MDNRPIGFLDSGVGGLTVVRELKRQLPHESIVYIGDSARAPYGPRPAGQIREYTWQLVKFLLTKDVKMIVIACNTATAVVWEEIKESLDIPVLGVVLPGSSAAIKSSRSGQIGVIGTPMTISSNIYEQKIKRLAPQMNVLSLSCPRFAPIVESNEINSSVAKKIVYESMAPLVDRVDTLVLGCTHYPLLRPIIQNVMGLSVKLIDSGAETVRDVSVLLNYFEINRSREVKDKTEEYYTTASVLGFKEIAEQWLGEEVTVQHVDLDKELEND.

Residues 10-11 (DS) and 42-43 (YG) each bind substrate. The active-site Proton donor/acceptor is C73. Substrate is bound at residue 74–75 (NT). Residue C183 is the Proton donor/acceptor of the active site. Residue 184–185 (TH) participates in substrate binding.

It belongs to the aspartate/glutamate racemases family.

It catalyses the reaction L-glutamate = D-glutamate. Its pathway is cell wall biogenesis; peptidoglycan biosynthesis. Provides the (R)-glutamate required for cell wall biosynthesis. This is Glutamate racemase from Streptococcus thermophilus (strain CNRZ 1066).